Here is a 146-residue protein sequence, read N- to C-terminus: Large ribosomal subunit protein uL15 (146 aa).

The interval 1–54 (MNLTDLRPADGSKQSGNFRRGRGHGSGNGKTAGKGHKGQKARSGAPRVGFEGGQ) is disordered.

Belongs to the universal ribosomal protein uL15 family. Part of the 50S ribosomal subunit.

In terms of biological role, binds to the 23S rRNA. The chain is Large ribosomal subunit protein uL15 from Lachnoclostridium phytofermentans (strain ATCC 700394 / DSM 18823 / ISDg) (Clostridium phytofermentans).